Consider the following 77-residue polypeptide: Exodeoxyribonuclease 7 small subunit (77 aa).

Belongs to the XseB family. Heterooligomer composed of large and small subunits.

Its subcellular location is the cytoplasm. The enzyme catalyses Exonucleolytic cleavage in either 5'- to 3'- or 3'- to 5'-direction to yield nucleoside 5'-phosphates.. In terms of biological role, bidirectionally degrades single-stranded DNA into large acid-insoluble oligonucleotides, which are then degraded further into small acid-soluble oligonucleotides. In Alkaliphilus oremlandii (strain OhILAs) (Clostridium oremlandii (strain OhILAs)), this protein is Exodeoxyribonuclease 7 small subunit.